The following is a 647-amino-acid chain: RalA-binding protein 1 (647 aa).

2 disordered regions span residues 1-151 and 163-186; these read MTEC…EKKC and WKEK…APSL. At threonine 2 the chain carries N-acetylthreonine. The segment covering 24-33 has biased composition (polar residues); it reads LTRTPSSEEI. Phosphoserine occurs at positions 29, 30, and 34. Threonine 44 is modified (phosphothreonine). 2 positions are modified to phosphoserine: serine 48 and serine 62. A compositionally biased stretch (basic and acidic residues) spans 52-68; the sequence is DILHEPPDIVSDDEKDH. ATP is bound at residue 69-74; it reads GKKKGK. The span at 69-79 shows a compositional bias: basic residues; that stretch reads GKKKGKFKKKE. A phosphoserine mark is found at serine 92 and serine 93. The span at 102–118 shows a compositional bias: basic residues; sequence KMKRSKGIHVFKKPSFS. Residues 102–119 form a nuclear localization signal region; that stretch reads KMKRSKGIHVFKKPSFSK. A compositionally biased stretch (basic and acidic residues) spans 119–151; it reads KKKEKDFKIKEKPKEEKHKEEKHKEEKHKEKKC. A mediates association with membranes and could form transmembrane domains region spans residues 154-219; it reads FTAADVVKQW…PAVFRECVDY (66 aa). In terms of domain architecture, Rho-GAP spans 192-380; it reads APFADAVERT…VLLKQVTRPL (189 aa). Residues 403–499 are mediates interaction with RALA and RALB; the sequence is RRQEFLLNCL…LTEQEELLAM (97 aa). 418–425 serves as a coordination point for ATP; the sequence is GGIKDFSK. Residues serine 461 and serine 463 each carry the phosphoserine modification. The segment at 500–647 is mediates interaction with REPS1 and REPS2; it reads EQFLRRQIAS…PSKDRKETPI (148 aa). Disordered regions lie at residues 525 to 550 and 601 to 647; these read QSRQ…DEEE and EQQL…ETPI. Positions 535 to 550 are enriched in acidic residues; it reads EEYSSDSESESEDEEE. Basic and acidic residues predominate over residues 628-647; that stretch reads RAAKEQAKPSPSKDRKETPI. Serine 637 is modified (phosphoserine).

As to quaternary structure, interacts with the GTP-bound form of RALA (via effector domain); during mitosis, recruits RALBP1 to the mitochondrion where it promotes DNM1L phosphorylation and mitochondrial fission. Interacts with DNM1L; mediates its mitotic kinase cyclin B-CDK1-mediated phosphorylation during mitosis to promote mitochondrial fission. Interacts with the mitotic kinase cyclin B-CDK1 during mitosis. Interacts with the GTP-bound form of RALB (via effector domain). Interacts with REPS1; the interaction is direct and does not affect RALA-binding nor GTPase activator activity of RALBP1. Interacts with REPS2; the interaction is direct and does not affect RALA-binding nor GTPase activator activity of RALBP1. Interacts with EPN1, NUMB and TFAP2A during interphase and mitosis. Interacts with AP2M1; as part of the AP2 complex. Interacts with CDC42. Interacts with RAC1. Tyrosine-phosphorylated upon stimulation of cells with EGF. Post-translationally, may undergo proteolytic cleavage to give peptides which reassemble to form a transporter complex. In terms of tissue distribution, ubiquitously expressed.

The protein localises to the cell membrane. The protein resides in the cytoplasm. Its subcellular location is the cytosol. It is found in the cytoskeleton. It localises to the spindle pole. The protein localises to the nucleus. The protein resides in the mitochondrion. It carries out the reaction an S-substituted glutathione(in) + ATP + H2O = an S-substituted glutathione(out) + ADP + phosphate + H(+). It catalyses the reaction ATP + H2O + xenobioticSide 1 = ADP + phosphate + xenobioticSide 2.. The catalysed reaction is leukotriene C4(in) + ATP + H2O = leukotriene C4(out) + ADP + phosphate + H(+). Multifunctional protein that functions as a downstream effector of RALA and RALB. As a GTPase-activating protein/GAP can inactivate CDC42 and RAC1 by stimulating their GTPase activity. As part of the Ral signaling pathway, may also regulate ligand-dependent EGF and insulin receptors-mediated endocytosis. During mitosis, may act as a scaffold protein in the phosphorylation of EPSIN/EPN1 by the mitotic kinase cyclin B-CDK1, preventing endocytosis during that phase of the cell cycle. During mitosis, also controls mitochondrial fission as an effector of RALA. Recruited to mitochondrion by RALA, acts as a scaffold to foster the mitotic kinase cyclin B-CDK1-mediated phosphorylation and activation of DNM1L. Functionally, could also function as a primary ATP-dependent active transporter for glutathione conjugates of electrophiles. May also actively catalyze the efflux of a wide range of substrates including xenobiotics like doxorubicin (DOX) contributing to cell multidrug resistance. This chain is RalA-binding protein 1, found in Rattus norvegicus (Rat).